Reading from the N-terminus, the 263-residue chain is MRRQEAGTSSLATRVGPEVLTTAAVASVTGCDDPLAAVLLGRPKVIEVLQRSAELIDRVPALAAAHHQIADYHAMRSRFFDAYLADAAAEGIRQCVVLAAGLDTRAFRLPWPDGMTVFEIDQPTVLRYKENALTAHGARPAAAWHPVGVESDMPWPRRLWESGFNHNEPTIWLAEGLLPLPDATQDALISEIDGLSAAGSRIAFDDVLGMCSGRSDAPGWLTSRGWWTDVVEARHLPGLSGRRDDDAQSYTAHAALVTAEKIA.

Residues Asp-121 and 150 to 151 contribute to the S-adenosyl-L-methionine site; that span reads ES.

It belongs to the UPF0677 family.

Its function is as follows. Exhibits S-adenosyl-L-methionine-dependent methyltransferase activity. The polypeptide is Putative S-adenosyl-L-methionine-dependent methyltransferase Mjls_0079 (Mycobacterium sp. (strain JLS)).